Reading from the N-terminus, the 471-residue chain is ATP synthase subunit beta (471 aa).

156 to 163 (GGAGVGKT) is a binding site for ATP.

Belongs to the ATPase alpha/beta chains family. In terms of assembly, F-type ATPases have 2 components, CF(1) - the catalytic core - and CF(0) - the membrane proton channel. CF(1) has five subunits: alpha(3), beta(3), gamma(1), delta(1), epsilon(1). CF(0) has three main subunits: a(1), b(2) and c(9-12). The alpha and beta chains form an alternating ring which encloses part of the gamma chain. CF(1) is attached to CF(0) by a central stalk formed by the gamma and epsilon chains, while a peripheral stalk is formed by the delta and b chains.

The protein resides in the cell inner membrane. The catalysed reaction is ATP + H2O + 4 H(+)(in) = ADP + phosphate + 5 H(+)(out). Produces ATP from ADP in the presence of a proton gradient across the membrane. The catalytic sites are hosted primarily by the beta subunits. In Nitratidesulfovibrio vulgaris (strain DSM 19637 / Miyazaki F) (Desulfovibrio vulgaris), this protein is ATP synthase subunit beta.